A 193-amino-acid chain; its full sequence is Probable DNA-directed RNA polymerase subunit delta (193 aa).

Residues L14–W81 form the HTH HARE-type domain. Composition is skewed to acidic residues over residues D119–L174 and D182–K193. The tract at residues D119–K193 is disordered.

The protein belongs to the RpoE family. RNAP is composed of a core of 2 alpha, a beta and a beta' subunits. The core is associated with a delta subunit and one of several sigma factors.

Its function is as follows. Participates in both the initiation and recycling phases of transcription. In the presence of the delta subunit, RNAP displays an increased specificity of transcription, a decreased affinity for nucleic acids, and an increased efficiency of RNA synthesis because of enhanced recycling. This is Probable DNA-directed RNA polymerase subunit delta from Leuconostoc citreum (strain KM20).